The chain runs to 378 residues: UPF0754 membrane protein BCQ_0944 (378 aa).

2 helical membrane passes run 1–21 (MNIW…GGFT) and 357–377 (YLGA…LLFL).

It belongs to the UPF0754 family.

It localises to the cell membrane. The chain is UPF0754 membrane protein BCQ_0944 from Bacillus cereus (strain Q1).